The chain runs to 357 residues: Peptide chain release factor 1 (357 aa).

Q235 carries the N5-methylglutamine modification. Positions 285–305 (KRHNEASAMRSAQVGSGDRSE) are disordered.

Belongs to the prokaryotic/mitochondrial release factor family. Post-translationally, methylated by PrmC. Methylation increases the termination efficiency of RF1.

It localises to the cytoplasm. Peptide chain release factor 1 directs the termination of translation in response to the peptide chain termination codons UAG and UAA. The polypeptide is Peptide chain release factor 1 (prfA) (Chlamydia pneumoniae (Chlamydophila pneumoniae)).